Consider the following 425-residue polypeptide: Histone-binding protein RBBP7 (425 aa).

An N-acetylalanine modification is found at Ala2. A Phosphoserine modification is found at Ser3. Lys4 bears the N6-acetyllysine; alternate mark. Residue Lys4 forms a Glycyl lysine isopeptide (Lys-Gly) (interchain with G-Cter in SUMO2); alternate linkage. Lys4 participates in a covalent cross-link: Glycyl lysine isopeptide (Lys-Gly) (interchain with G-Cter in ubiquitin); alternate. Residue Thr10 is modified to Phosphothreonine. Residues Glu13 and Ser95 each carry the phosphoserine modification. 7 WD repeats span residues 47 to 122, 128 to 173, 181 to 217, 228 to 269, 275 to 312, 318 to 369, and 376 to 403; these read QWLP…KINH, RARY…LRLR, GLSW…KIVD, VVED…HLVD, VNCL…LHTF, EIFQ…LFIH, and ISDF…IWQM. Residue Lys101 forms a Glycyl lysine isopeptide (Lys-Gly) (interchain with G-Cter in SUMO2) linkage. Lys119 is subject to N6-acetyllysine. Lys155 participates in a covalent cross-link: Glycyl lysine isopeptide (Lys-Gly) (interchain with G-Cter in SUMO2). Lys159 carries the post-translational modification N6-acetyllysine; alternate. Residue Lys159 forms a Glycyl lysine isopeptide (Lys-Gly) (interchain with G-Cter in SUMO2); alternate linkage. Ser354 is modified (phosphoserine).

The protein belongs to the WD repeat RBAP46/RBAP48/MSI1 family. As to quaternary structure, binds directly to helix 1 of the histone fold of histone H4, a region that is not accessible when H4 is in chromatin. Subunit of the type B histone acetyltransferase (HAT) complex, composed of RBBP7 and HAT1. Subunit of the core histone deacetylase (HDAC) complex, which is composed of HDAC1, HDAC2, RBBP4 and RBBP7. The core HDAC complex associates with SIN3A, ARID4B/SAP180, SAP18, SAP30, SAP130, SUDS3/SAP45 and possibly ARID4A/RBP1 and ING1 to form the SIN3 HDAC complex. Component of the nucleosome remodeling and deacetylase (NuRD) repressor complex, composed of core proteins MTA1, MTA2, MTA3, RBBP4, RBBP7, HDAC1, HDAC2, MBD2, MBD3, and peripherally associated proteins CDK2AP1, CDK2AP2, GATAD2A, GATAD2B, CHD3, CHD4 and CHD5. The exact stoichiometry of the NuRD complex is unknown, and some subunits such as MBD2 and MBD3, GATAD2A and GATAD2B, and CHD3, CHD4 and CHD5 define mutually exclusive NuRD complexes. The NuRD complex may interact with MBD3L1. The NuRD complex may interact with MBD3L2. Subunit of the PRC2/EED-EZH2 complex, which is composed of at least EED, EZH2, RBBP4, RBBP7 and SUZ12. The PRC2/EED-EZH2 complex may also associate with HDAC1. Component of the NURF-1 ISWI chromatin remodeling complex (also called the nucleosome-remodeling factor (NURF) complex) at least composed of SMARCA1 (isoform 2), BPTF, RBBP4 and RBBP7. Within the complex interacts with isoform 2 of SMARCA1. Component of the BPFT-SMARCA1 complex at least composed of SMARCA1 (isoform 1), BPFT, RBBP4 and RBBP7; the complex is catalytically inactive and does not remodel chromatin. Within the complex interacts with isoform 1 of SMARCA1. Interacts with BRCA1. Interacts with CDK2AP1. Interacts with CENPA. Interacts with CHD3. Interacts with CHD4. Interacts with CREBBP, and this interaction may be enhanced by the binding of phosphorylated CREB1 to CREBBP. Interacts with HDAC7. Interacts with MTA1. Interacts with PWWP2B. Interacts with RB1 (via viral protein-binding domain). Interacts with SUV39H1.

It localises to the nucleus. In terms of biological role, core histone-binding subunit that may target chromatin remodeling factors, histone acetyltransferases and histone deacetylases to their histone substrates in a manner that is regulated by nucleosomal DNA. Component of several complexes which regulate chromatin metabolism. These include the type B histone acetyltransferase (HAT) complex, which is required for chromatin assembly following DNA replication; the core histone deacetylase (HDAC) complex, which promotes histone deacetylation and consequent transcriptional repression; the nucleosome remodeling and histone deacetylase complex (the NuRD complex), which promotes transcriptional repression by histone deacetylation and nucleosome remodeling; and the PRC2/EED-EZH2 complex, which promotes repression of homeotic genes during development; and the NURF (nucleosome remodeling factor) complex. The sequence is that of Histone-binding protein RBBP7 (RBBP7) from Homo sapiens (Human).